A 371-amino-acid chain; its full sequence is Flagellar P-ring protein (371 aa).

Residues 1–25 form the signal peptide; sequence MKMRACKWLLTLAVAFAATLSSAYA.

Belongs to the FlgI family. As to quaternary structure, the basal body constitutes a major portion of the flagellar organelle and consists of four rings (L,P,S, and M) mounted on a central rod.

The protein resides in the periplasm. It is found in the bacterial flagellum basal body. Its function is as follows. Assembles around the rod to form the L-ring and probably protects the motor/basal body from shearing forces during rotation. This is Flagellar P-ring protein from Sinorhizobium medicae (strain WSM419) (Ensifer medicae).